A 270-amino-acid polypeptide reads, in one-letter code: ATP synthase subunit a (270 aa).

5 helical membrane passes run 37 to 57 (NVHI…LWVF), 98 to 118 (IAPL…MDLV), 143 to 163 (DVNI…YYSI), 217 to 237 (VVFI…GALP), and 239 to 259 (AIFH…LTIV).

This sequence belongs to the ATPase A chain family. In terms of assembly, F-type ATPases have 2 components, CF(1) - the catalytic core - and CF(0) - the membrane proton channel. CF(1) has five subunits: alpha(3), beta(3), gamma(1), delta(1), epsilon(1). CF(0) has three main subunits: a(1), b(2) and c(9-12). The alpha and beta chains form an alternating ring which encloses part of the gamma chain. CF(1) is attached to CF(0) by a central stalk formed by the gamma and epsilon chains, while a peripheral stalk is formed by the delta and b chains.

Its subcellular location is the cell inner membrane. Functionally, key component of the proton channel; it plays a direct role in the translocation of protons across the membrane. This chain is ATP synthase subunit a, found in Aliivibrio fischeri (strain ATCC 700601 / ES114) (Vibrio fischeri).